Consider the following 286-residue polypeptide: Aquaporin PIP1-3 (286 aa).

Position 1 is an N-acetylmethionine (methionine 1). Positions 1-33 (MEGKEEDVRVGANKFPERQPIGTSAQTDKDYKE) are disordered. The Cytoplasmic portion of the chain corresponds to 1 to 54 (MEGKEEDVRVGANKFPERQPIGTSAQTDKDYKEPPPAPFFEPGELSSWSFYRAG). The helical transmembrane segment at 55–75 (IAEFIATFLFLYITVLTVMGV) threads the bilayer. The Extracellular segment spans residues 76-81 (KRAPNM). The chain crosses the membrane as a helical span at residues 82-102 (CASVGIQGIAWAFGGMIFALV). The Cytoplasmic portion of the chain corresponds to 103–132 (YCTAGISGGHINPAVTFGLFLARKLSLTRA). The NPA 1 signature appears at 114-116 (NPA). A helical membrane pass occupies residues 133 to 153 (VFYIVMQCLGAICGAGVVKGF). Topologically, residues 154–174 (QPNPYQTLGGGANTVAHGYTK) are extracellular. The helical transmembrane segment at 175 to 195 (GSGLGAEIIGTFVLVYTVFSA) threads the bilayer. The Cytoplasmic segment spans residues 196 to 208 (TDAKRSARDSHVP). Residues 209 to 229 (ILAPLPIGFAVFLVHLATIPI) traverse the membrane as a helical segment. Over 230–256 (TGTGINPARSLGAAIIYNKDHAWDDHW) the chain is Extracellular. Residues 235–237 (NPA) carry the NPA 2 motif. Residues 257-277 (IFWVGPFIGAALAALYHQLVI) form a helical membrane-spanning segment. Residues 278 to 286 (RAIPFKSRS) are Cytoplasmic-facing. Serine 284 is subject to Phosphoserine.

It belongs to the MIP/aquaporin (TC 1.A.8) family. PIP (TC 1.A.8.11) subfamily. As to expression, expressed in roots, above ground, ripening fruit, flower buds, green siliques and senescing leaves.

The protein localises to the cell membrane. In terms of biological role, water channel required to facilitate the transport of water across cell membrane. Its function is impaired by Hg(2+). The protein is Aquaporin PIP1-3 (PIP1-3) of Arabidopsis thaliana (Mouse-ear cress).